We begin with the raw amino-acid sequence, 29 residues long: Acidic phospholipase A2 Omo-E6 (29 aa).

The Ca(2+) site is built by Tyr27 and Gly29.

It depends on Ca(2+) as a cofactor. As to expression, expressed by the venom gland.

The protein resides in the secreted. The enzyme catalyses a 1,2-diacyl-sn-glycero-3-phosphocholine + H2O = a 1-acyl-sn-glycero-3-phosphocholine + a fatty acid + H(+). Snake venom phospholipase A2 (PLA2) that inhibits the ADP- and collagen-induced human platelet aggregation. Exhibits strong hydrolytic activities and prefers the anionic micelles (dPPC with deoxycholate) to the zwitterionic micelles (dPPC with Triton X-100). PLA2 catalyzes the calcium-dependent hydrolysis of the 2-acyl groups in 3-sn-phosphoglycerides. This chain is Acidic phospholipase A2 Omo-E6, found in Ovophis monticola (Chinese mountain pitviper).